The primary structure comprises 831 residues: MGAPALLWPSLLLPWLTVLFGQPPGTLAQTQVCSVNQTIFRVEENTTVSEPLVNIFVPDGLHVTLGPLSTPYAFRIEGKDLFLNVTPDYEENSLLQADVECKRGDAVVVRLEVFVAVLDINDNAPKFSFEIKTFNVSEDTKVNTTVIPETQLKATDADINDILVYTLQEVTPNASKFFSLEGVNYPALKLDQTLDYFKNQNMTFMLLARDTWEENVEPSHTATATLVLNTLPADLRTPWFLPCSFTDGYVCIHAQYSAVVPTGHKLPSPLIMSPGPIYAVDGDQAINQSIIYSIIAGNTDGTFIINAHDGNLTMTKSIPSPMKFTLLIRADQEDMAQYSVTQAIVEARSVTGNPLQFSQSLYYGTVVLGSEAGTAVKDKTFPSEILRIQAQYPGFPDLNSAVTYRVTNSSEFMMNKDIMLTAVPMEEARTIRVEVEASNTVTKDTATAVVEIQVSERERTPTPPEAGGTTGPSSNTTMEAPLTSGTSQRPATTSSGGSVGPFPPGGTTLRPPTPASSIPGGSPTLGTSTSPQTTTPGGDSAQTPKPGTSHPTAPTSRTSTSLMTTSSRSDSTQTPKPGTSQPMVPIPGASTSSQPATPSGSSPQTPKPGTSQSTATGPISLPSTGAGEQGDGQRFSTVDMAVLGGVLGALLLLALICLVILVHKHYRHRLACCSGKASEPQPSGYDNLTFLPDHKAKWSPTPNRKPEPSPKLAQPPLRPPSPMSSSPTPPSSTPPSPQPKASGSPKTVQAGDSPSAVRSILTKERRPEGEGGYKAVWFGKDIGAEADVVVLNEPTADVDSASASGSEGSDDDDPDQKKTLRFGVDADNTYI.

Residues 1–28 (MGAPALLWPSLLLPWLTVLFGQPPGTLA) form the signal peptide. The Extracellular portion of the chain corresponds to 29–641 (QTQVCSVNQT…GQRFSTVDMA (613 aa)). 11 N-linked (GlcNAc...) asparagine glycosylation sites follow: N36, N45, N84, N135, N143, N173, N201, N287, N311, N408, and N475. Cadherin domains are found at residues 53 to 125 (VNIF…DNAP), 128 to 240 (SFEI…TPWF), 252 to 357 (IHAQ…PLQF), and 358 to 459 (SQSL…ERER). A disordered region spans residues 452-632 (IQVSERERTP…STGAGEQGDG (181 aa)). The span at 473–491 (SSNTTMEAPLTSGTSQRPA) shows a compositional bias: polar residues. Residues 505 to 540 (GGTTLRPPTPASSIPGGSPTLGTSTSPQTTTPGGDS) show a composition bias toward low complexity. The span at 541-554 (AQTPKPGTSHPTAP) shows a compositional bias: polar residues. 2 consecutive repeat copies span residues 541-571 (AQTP…RSDS) and 572-602 (TQTP…SGSS). Positions 541 to 614 (AQTPKPGTSH…TPKPGTSQST (74 aa)) are 3 X 31 AA approximate tandem repeats. Positions 555–572 (TSRTSTSLMTTSSRSDST) are enriched in low complexity. Polar residues-rich tracts occupy residues 573 to 582 (QTPKPGTSQP) and 589 to 623 (ASTS…SLPS). One copy of the 3; truncated repeat lies at 605–614 (TPKPGTSQST). The helical transmembrane segment at 642–662 (VLGGVLGALLLLALICLVILV) threads the bilayer. At 663 to 831 (HKHYRHRLAC…FGVDADNTYI (169 aa)) the chain is on the cytoplasmic side. The tract at residues 663-831 (HKHYRHRLAC…FGVDADNTYI (169 aa)) is mediates interaction with USH1C and MYO7B and is required for proper localization to microvilli tips and function in microvilli organization. Disordered regions lie at residues 675 to 774 (GKAS…GGYK) and 793 to 831 (EPTA…NTYI). 3 positions are modified to phosphoserine: S699, S721, and S725. Residues 716–738 (PLRPPSPMSSSPTPPSSTPPSPQ) show a composition bias toward pro residues. At T728 the chain carries Phosphothreonine. A phosphoserine mark is found at S736 and S753. Residues 761–771 (LTKERRPEGEG) show a composition bias toward basic and acidic residues. Phosphothreonine is present on T795. Positions 797-807 (DVDSASASGSE) are enriched in low complexity. Phosphoserine occurs at positions 802, 804, and 806.

In terms of assembly, part of the IMAC/intermicrovillar adhesion complex/intermicrovillar tip-link complex composed of ANKS4B, MYO7B, USH1C, CDHR2 and CDHR5. Interacts (via cytoplasmic domain) with USH1C and MYO7B; required for proper localization of CDHR5 to microvilli tips and its function in brush border differentiation. In terms of processing, N- and O-glycosylated.

Its subcellular location is the apical cell membrane. The protein resides in the cell projection. It localises to the microvillus membrane. In terms of biological role, intermicrovillar adhesion molecule that forms, via its extracellular domain, calcium-dependent heterophilic complexes with CDHR2 on adjacent microvilli. Thereby, controls the packing of microvilli at the apical membrane of epithelial cells. Through its cytoplasmic domain, interacts with microvillus cytoplasmic proteins to form the intermicrovillar adhesion complex/IMAC. This complex plays a central role in microvilli and epithelial brush border differentiation. This is Cadherin-related family member 5 from Mus musculus (Mouse).